The sequence spans 270 residues: Homeobox protein Hox-D12 (270 aa).

The segment at 102–122 (APEAAAGPEERGRTRPSFAPE) is disordered. The homeobox DNA-binding region spans 202 to 261 (ARKKRKPYTKQQIAELENEFLVNEFINRQKRKELSNRLNLSDQQVKIWFQNRRMKKKRVV).

Belongs to the Abd-B homeobox family.

It localises to the nucleus. Its function is as follows. Sequence-specific transcription factor which is part of a developmental regulatory system that provides cells with specific positional identities on the anterior-posterior axis. The chain is Homeobox protein Hox-D12 (HOXD12) from Homo sapiens (Human).